Consider the following 487-residue polypeptide: Adenosylhomocysteinase (487 aa).

Residues threonine 76, aspartate 151, and glutamate 212 each contribute to the substrate site. Residue 213–215 participates in NAD(+) binding; that stretch reads TTT. Substrate contacts are provided by lysine 242 and aspartate 246. NAD(+)-binding positions include asparagine 247, 276 to 281, glutamate 299, asparagine 334, 355 to 357, and asparagine 403; these read GYGDVG and IGH.

It belongs to the adenosylhomocysteinase family. NAD(+) is required as a cofactor.

The protein resides in the cytoplasm. The catalysed reaction is S-adenosyl-L-homocysteine + H2O = L-homocysteine + adenosine. It participates in amino-acid biosynthesis; L-homocysteine biosynthesis; L-homocysteine from S-adenosyl-L-homocysteine: step 1/1. Functionally, may play a key role in the regulation of the intracellular concentration of adenosylhomocysteine. This is Adenosylhomocysteinase from Bacteroides fragilis (strain YCH46).